A 396-amino-acid chain; its full sequence is NADH-quinone oxidoreductase subunit D 1 (396 aa).

It belongs to the complex I 49 kDa subunit family. In terms of assembly, NDH-1 is composed of 14 different subunits. Subunits NuoB, C, D, E, F, and G constitute the peripheral sector of the complex.

It is found in the cell inner membrane. The catalysed reaction is a quinone + NADH + 5 H(+)(in) = a quinol + NAD(+) + 4 H(+)(out). Functionally, NDH-1 shuttles electrons from NADH, via FMN and iron-sulfur (Fe-S) centers, to quinones in the respiratory chain. The immediate electron acceptor for the enzyme in this species is believed to be ubiquinone. Couples the redox reaction to proton translocation (for every two electrons transferred, four hydrogen ions are translocated across the cytoplasmic membrane), and thus conserves the redox energy in a proton gradient. The protein is NADH-quinone oxidoreductase subunit D 1 of Rhizobium etli (strain ATCC 51251 / DSM 11541 / JCM 21823 / NBRC 15573 / CFN 42).